We begin with the raw amino-acid sequence, 265 residues long: Phosphonates import ATP-binding protein PhnC (265 aa).

The region spanning 3-247 (LRLKQAFLHH…MLDTLYANEQ (245 aa)) is the ABC transporter domain. Position 36–43 (36–43 (GPSGAGKS)) interacts with ATP.

The protein belongs to the ABC transporter superfamily. Phosphonates importer (TC 3.A.1.9.1) family. In terms of assembly, the complex is composed of two ATP-binding proteins (PhnC), two transmembrane proteins (PhnE) and a solute-binding protein (PhnD).

It is found in the cell inner membrane. The enzyme catalyses phosphonate(out) + ATP + H2O = phosphonate(in) + ADP + phosphate + H(+). In terms of biological role, part of the ABC transporter complex PhnCDE involved in phosphonates import. Responsible for energy coupling to the transport system. The sequence is that of Phosphonates import ATP-binding protein PhnC from Pseudomonas fluorescens (strain Pf0-1).